Reading from the N-terminus, the 423-residue chain is Methanol:N,N-dimethyl-4-nitrosoaniline oxidoreductase (423 aa).

This sequence belongs to the iron-containing alcohol dehydrogenase family. In terms of assembly, homodecamer. Requires Mg(2+) as cofactor. The cofactor is Zn(2+). It depends on NADPH as a cofactor.

The catalysed reaction is methanol + A = formaldehyde + AH2. Catalyzes the oxidation of methanol to yield formaldehyde. While the in vivo electron acceptor is not known, N,N-dimethyl-4-nitrosoaniline (NDMA) can serve this function in vitro and is reduced to 4-(hydroxylamino)-N,N-dimethylaniline. This chain is Methanol:N,N-dimethyl-4-nitrosoaniline oxidoreductase (thcE), found in Rhodococcus erythropolis (Arthrobacter picolinophilus).